The sequence spans 347 residues: N-acetyl-gamma-glutamyl-phosphate reductase (347 aa).

Residue Cys-150 is part of the active site.

This sequence belongs to the NAGSA dehydrogenase family. Type 1 subfamily.

The protein localises to the cytoplasm. It catalyses the reaction N-acetyl-L-glutamate 5-semialdehyde + phosphate + NADP(+) = N-acetyl-L-glutamyl 5-phosphate + NADPH + H(+). It participates in amino-acid biosynthesis; L-arginine biosynthesis; N(2)-acetyl-L-ornithine from L-glutamate: step 3/4. Functionally, catalyzes the NADPH-dependent reduction of N-acetyl-5-glutamyl phosphate to yield N-acetyl-L-glutamate 5-semialdehyde. The protein is N-acetyl-gamma-glutamyl-phosphate reductase of Halothermothrix orenii (strain H 168 / OCM 544 / DSM 9562).